The primary structure comprises 121 residues: Large ribosomal subunit protein bL12 (121 aa).

The protein belongs to the bacterial ribosomal protein bL12 family. In terms of assembly, homodimer. Part of the ribosomal stalk of the 50S ribosomal subunit. Forms a multimeric L10(L12)X complex, where L10 forms an elongated spine to which 2 to 4 L12 dimers bind in a sequential fashion. Binds GTP-bound translation factors.

In terms of biological role, forms part of the ribosomal stalk which helps the ribosome interact with GTP-bound translation factors. Is thus essential for accurate translation. This chain is Large ribosomal subunit protein bL12, found in Shewanella baltica (strain OS223).